We begin with the raw amino-acid sequence, 88 residues long: Potassium channel toxin MeuTXKbeta3-meucin-24 (88 aa).

The N-terminal stretch at 1–22 (MMKQQFFLFLAVIVMISSVIEA) is a signal peptide. A BetaSPN-type CS-alpha/beta domain is found at 55–88 (EYACPVIEKWCEDHCQAKNAIGRCENTECKCLSK). Cystine bridges form between C58-C78, C65-C83, and C69-C85.

The protein belongs to the long chain scorpion toxin family. Class 2 subfamily. In terms of tissue distribution, expressed by the venom gland.

It is found in the secreted. In terms of biological role, inhibits voltage-gated potassium channels. Its function is as follows. The synthetic meucin-24 inhibits the development of P.berghei ookinetes, kills intraerythrocytic P.falciparum, and is cytotoxic to the Drosophila S2 cells at micromolar concentrations. No antibacterial, antifungal and hemolytic activities have been found at micromolar concentrations. This is Potassium channel toxin MeuTXKbeta3-meucin-24 from Mesobuthus eupeus (Lesser Asian scorpion).